Here is a 203-residue protein sequence, read N- to C-terminus: MILNKEFYKQGALILAKELLGKVIIRKVDGVTLRAKIVETEAYIGEIDKASHAYNGRRTERTEPLFREGGIAYVYFIYGKYYCFNVISGLEDKGEGVLIRAFEPLNEFDYLAKKRFNQNYDELSETKKKAITNGPSKLCIAFSIDKSENYKRLYDEGDFYIEEGEKDTFKIVETKRIGIDYAEEAIDFPWRFYIEGNKYISKK.

Belongs to the DNA glycosylase MPG family.

The polypeptide is Putative 3-methyladenine DNA glycosylase (Clostridium beijerinckii (strain ATCC 51743 / NCIMB 8052) (Clostridium acetobutylicum)).